We begin with the raw amino-acid sequence, 293 residues long: uncharacterized protein (293 aa).

Positions 1 to 58 constitute an HTH lysR-type domain; that stretch reads MDLRRFITLKTVVEEGSFLRASQKLCCTQSTVTFHIQQLEQEFSVQLFEKIGRRMCLT. The H-T-H motif DNA-binding region spans 18-37; that stretch reads FLRASQKLCCTQSTVTFHIQ.

The protein belongs to the LysR transcriptional regulatory family.

This is an uncharacterized protein from Escherichia coli (strain K12).